The following is an 882-amino-acid chain: Holliday junction resolvase MOC1, chloroplastic (882 aa).

Disordered stretches follow at residues 87–148 (IRDG…QTPT) and 323–351 (TPAA…PRAA). The segment covering 91 to 111 (PNSNSRCSTVRTHATRSKSTG) has biased composition (polar residues). The segment covering 112 to 125 (PSRATSSGPATAAP) has biased composition (low complexity). Over residues 134-148 (NDTQDGGLTSEQTPT) the composition is skewed to polar residues. The span at 323 to 337 (TPAAASQTPPTTVTS) shows a compositional bias: low complexity. Residues Asp-397, Glu-552, Asn-629, and Asp-634 each coordinate Mg(2+). The tract at residues 710–882 (KVERKAQARS…DGGVSGSESE (173 aa)) is disordered. Residues 732–743 (EEPEAQAEEEQA) are compositionally biased toward acidic residues. Composition is skewed to low complexity over residues 744-758 (EAGT…GAAA), 769-783 (VESG…VAAG), 810-819 (SGKSSSKAEA), and 830-844 (ASVG…SVGS). Gly residues-rich tracts occupy residues 845–857 (SSGG…GGVK) and 868–882 (AKAG…SESE).

It depends on Mg(2+) as a cofactor. Mn(2+) serves as cofactor.

Its subcellular location is the plastid. The protein localises to the chloroplast. It catalyses the reaction Endonucleolytic cleavage at a junction such as a reciprocal single-stranded crossover between two homologous DNA duplexes (Holliday junction).. A structure-specific endonuclease that resolves Holliday junction (HJ) intermediates during genetic recombination. Cleaves 4-way DNA junctions introducing paired nicks in opposing strands, leaving a 5'-terminal phosphate and a 3'-terminal hydroxyl group that are ligated to produce recombinant products. Mediates chloroplast nucleoid segregation during chloroplast division. The protein is Holliday junction resolvase MOC1, chloroplastic of Chlamydomonas reinhardtii (Chlamydomonas smithii).